A 344-amino-acid polypeptide reads, in one-letter code: Interactor of constitutive active ROPs 1 (344 aa).

Disordered stretches follow at residues 1-74 (MPRP…ESQL), 92-139 (EAVK…KETD), 186-218 (HESL…DEMV), and 307-344 (FMDP…KGQK). A compositionally biased stretch (low complexity) spans 19–29 (SSSSTSDSNHS). A coiled-coil region spans residues 60 to 108 (QKKLGGRISDLESQLGQAQEELRLLKEQLANAEAVKKQAQDELHKKSKK). 3 stretches are compositionally biased toward basic and acidic residues: residues 93–103 (AVKKQAQDELH), 114–139 (RVEE…KETD), and 186–195 (HESLGKENES). Residues 145–273 (VEKIAVEEEE…EQWRKAADAA (129 aa)) are a coiled coil. A compositionally biased stretch (polar residues) spans 196–211 (LKNQLSDSASEISNVK).

It belongs to the ICR family. Homooligomer. Interacts with ARAC3, ARAC4, ARAC8, ARAC11 and SEC3A, but not with ICR2 or EXO70A1. Expressed in mature and germinating pollen. Expressed throughout the embryo but not in the hypophysis and quiescent center (QC). In roots, absent from the QC and the stem cells.

The protein localises to the cell membrane. The protein resides in the nucleus. Functionally, acts as a scaffold, mediating interaction of ROPs with different proteins. Required for primary and adventitious root maintenance, but not for their formation. Promotes the stabilization of ARAC11 on the plasma membrane of the pollen tube initiation site but not the activation of ARAC11. Regulates directionality of polar auxin transport, and is required for the formation of a stable auxin maximum and tip localized auxin gradient during embryogenesis, organogenesis, and meristem activity. Involved in exocytosis and in the recycling of PIN proteins back to the plasma membrane. The protein is Interactor of constitutive active ROPs 1 (ICR1) of Arabidopsis thaliana (Mouse-ear cress).